The sequence spans 130 residues: Small ribosomal subunit protein uS8 (130 aa).

This sequence belongs to the universal ribosomal protein uS8 family. As to quaternary structure, part of the 30S ribosomal subunit. Contacts proteins S5 and S12.

One of the primary rRNA binding proteins, it binds directly to 16S rRNA central domain where it helps coordinate assembly of the platform of the 30S subunit. The chain is Small ribosomal subunit protein uS8 from Cronobacter sakazakii (strain ATCC BAA-894) (Enterobacter sakazakii).